The following is a 112-amino-acid chain: Large ribosomal subunit protein uL1 (112 aa).

Belongs to the universal ribosomal protein uL1 family.

This chain is Large ribosomal subunit protein uL1 (rpl-10a), found in Caenorhabditis remanei (Caenorhabditis vulgaris).